The primary structure comprises 904 residues: Patched domain-containing protein 4 (904 aa).

A helical transmembrane segment spans residues H41–L61. Residue N149 is glycosylated (N-linked (GlcNAc...) asparagine). In terms of domain architecture, SSD spans T291–F450. Transmembrane regions (helical) follow at residues V295–M312, G323–I343, T351–L371, V394–S414, V431–A451, and P523–I543. An N-linked (GlcNAc...) asparagine glycan is attached at N625. The next 3 helical transmembrane spans lie at P718–I738, F744–W764, and I771–L791. N820 is a glycosylation site (N-linked (GlcNAc...) asparagine). The next 2 membrane-spanning stretches (helical) occupy residues S823–F843 and C845–L865.

The protein belongs to the patched family.

Its subcellular location is the membrane. Could act as a repressor of canonical hedgehog signaling by antagonizing the effects of SMO, as suggested by down-regulation of hedgehog target genes, including GLI1, PTCH1, and PTCH2 in PTCHD4-expressing cells. This chain is Patched domain-containing protein 4 (Ptchd4), found in Mus musculus (Mouse).